The chain runs to 659 residues: Anoctamin-10 (659 aa).

Residues 1 to 207 (MRVTLSTLDT…DSIRSYFGET (207 aa)) are Cytoplasmic-facing. A helical transmembrane segment spans residues 208–228 (IALYFGFLEYFTFALIPMAII). Residues 229–240 (GLPYYLFVWEDY) lie on the Extracellular side of the membrane. A helical transmembrane segment spans residues 241–261 (DKYVIFASFNLIWSTVILEVW). The Cytoplasmic segment spans residues 262-316 (KRGCANMTYRWGTLVMKRQFEEPRPGFHGVLGINSVTGREEPLYSSYKRQLRIYL). Residues 317-337 (VSLPFVCLCLYFSLYVMMIYF) form a helical membrane-spanning segment. At 338 to 352 (DMEDWALSLHEDSGS) the chain is on the extracellular side. Residues 353–373 (EWTSLLLYVPSIVYAVVIEIM) form a helical membrane-spanning segment. The Cytoplasmic segment spans residues 374–400 (NRLYRYAAEFLTSWENHRLESAYQNHL). Residues 401-421 (VLKVLVFNFLNCFASLFYIAF) form a helical membrane-spanning segment. Over 422–500 (VLKDMKLLRQ…YLGTFDDYLE (79 aa)) the chain is Extracellular. Residues 501–521 (LFLQFGYVSLFSCVYPLAAAF) form a helical membrane-spanning segment. The Cytoplasmic portion of the chain corresponds to 522 to 553 (AVLNNFTEVNSDALKMCRVFKRPFAEPSASIG). The chain crosses the membrane as a helical span at residues 554 to 574 (VWQLAFETMSVISVVTNCALI). Over 575–590 (GMSPQVNAVFPESKTD) the chain is Extracellular. Residues 591-611 (LVLIVVAVEHALLALKFILAF) traverse the membrane as a helical segment. Residues 612 to 659 (AIPDKPRHIQQKLARLEFESLEALKQQQMKLVAENLKEEYQEDGKEAT) are Cytoplasmic-facing.

Belongs to the anoctamin family. Predominant expression seen in epithelial tissues.

It localises to the cell membrane. Does not exhibit calcium-activated chloride channel (CaCC) activity. Can inhibit the activity of ANO1. The sequence is that of Anoctamin-10 (Ano10) from Mus musculus (Mouse).